Consider the following 77-residue polypeptide: Acyl carrier protein (77 aa).

The Carrier domain maps to 1–76; the sequence is MAIFDDVKKV…DVVNYIENLQ (76 aa). O-(pantetheine 4'-phosphoryl)serine is present on serine 36.

The protein belongs to the acyl carrier protein (ACP) family. 4'-phosphopantetheine is transferred from CoA to a specific serine of apo-ACP by AcpS. This modification is essential for activity because fatty acids are bound in thioester linkage to the sulfhydryl of the prosthetic group.

It localises to the cytoplasm. It functions in the pathway lipid metabolism; fatty acid biosynthesis. Functionally, carrier of the growing fatty acid chain in fatty acid biosynthesis. The sequence is that of Acyl carrier protein from Campylobacter lari (strain RM2100 / D67 / ATCC BAA-1060).